The primary structure comprises 371 residues: Partitioning defective 6 homolog beta (371 aa).

A phosphoserine mark is found at S10 and S11. Residues 16-96 (TMEVKSKFGA…PLLRIFIQKK (81 aa)) enclose the PB1 domain. An interaction with PARD3 and CDC42 region spans residues 126-253 (RKKPHIVISM…ITVRPANQRN (128 aa)). Residues 133-150 (ISMPQDFRPVSSIIDVDI) enclose the Pseudo-CRIB domain. The 94-residue stretch at 157–250 (RVRLYKYGTE…NLIITVRPAN (94 aa)) folds into the PDZ domain. Disordered stretches follow at residues 253–273 (NNVV…DNSL) and 326–371 (FESG…IITL). Over residues 326–340 (FESGQNGFSPPQDTS) the composition is skewed to polar residues. Over residues 352–363 (LESRAPDQKLLE) the composition is skewed to basic and acidic residues.

The protein belongs to the PAR6 family. In terms of assembly, interacts with PARD3. Interacts with GTP-bound forms of CDC42, RHOQ/TC10 and RAC1. Interacts with the N-terminal part of PRKCI and PRKCZ. Part of a complex with PARD3, CDC42 or RAC1 and PRKCI or PRKCZ. Part of a complex with LLGL1 and PRKCI. Interacts with ALS2CR19. Interacts with ECT2. Interacts with PALS1. In terms of tissue distribution, expressed in pancreas and in both adult and fetal kidney. Weakly expressed in placenta and lung. Not expressed in other tissues.

It is found in the cytoplasm. It localises to the cell membrane. The protein resides in the cell junction. The protein localises to the tight junction. Its function is as follows. Adapter protein involved in asymmetrical cell division and cell polarization processes. Probably involved in formation of epithelial tight junctions. Association with PARD3 may prevent the interaction of PARD3 with F11R/JAM1, thereby preventing tight junction assembly. The PARD6-PARD3 complex links GTP-bound Rho small GTPases to atypical protein kinase C proteins. The sequence is that of Partitioning defective 6 homolog beta (Pard6b) from Mus musculus (Mouse).